A 137-amino-acid chain; its full sequence is Sec-independent protein translocase protein TatB (137 aa).

A helical transmembrane segment spans residues 2–22 (FANIGWGEMLILVIAGLVILG). Positions 92–137 (FFTGKFDQQNGKPAAGQEKPVTPVNPPVTATPPSESTATPFDSDAT) are disordered. A compositionally biased stretch (low complexity) spans 122–131 (TPPSESTATP).

This sequence belongs to the TatB family. As to quaternary structure, the Tat system comprises two distinct complexes: a TatABC complex, containing multiple copies of TatA, TatB and TatC subunits, and a separate TatA complex, containing only TatA subunits. Substrates initially bind to the TatABC complex, which probably triggers association of the separate TatA complex to form the active translocon.

The protein resides in the cell membrane. Functionally, part of the twin-arginine translocation (Tat) system that transports large folded proteins containing a characteristic twin-arginine motif in their signal peptide across membranes. Together with TatC, TatB is part of a receptor directly interacting with Tat signal peptides. TatB may form an oligomeric binding site that transiently accommodates folded Tat precursor proteins before their translocation. The polypeptide is Sec-independent protein translocase protein TatB (Mycobacterium sp. (strain JLS)).